Consider the following 152-residue polypeptide: Deoxyuridine 5'-triphosphate nucleotidohydrolase (152 aa).

Residues Arg-71–Gly-73, Asn-84, Leu-88–Asp-90, and Met-98 contribute to the substrate site.

It belongs to the dUTPase family. Requires Mg(2+) as cofactor.

It carries out the reaction dUTP + H2O = dUMP + diphosphate + H(+). It participates in pyrimidine metabolism; dUMP biosynthesis; dUMP from dCTP (dUTP route): step 2/2. This enzyme is involved in nucleotide metabolism: it produces dUMP, the immediate precursor of thymidine nucleotides and it decreases the intracellular concentration of dUTP so that uracil cannot be incorporated into DNA. The protein is Deoxyuridine 5'-triphosphate nucleotidohydrolase of Serratia proteamaculans (strain 568).